The primary structure comprises 190 residues: Elongation factor P-like protein (190 aa).

This sequence belongs to the elongation factor P family.

The polypeptide is Elongation factor P-like protein (Yersinia enterocolitica serotype O:8 / biotype 1B (strain NCTC 13174 / 8081)).